Reading from the N-terminus, the 383-residue chain is MGLHFTLLLAALANCLCPARLCIICDPFVVAAIKTLEQNYLPTHLAPEHHEDVMKRVEQEVRNFADLPLNQNTFLGVVDEDTLEQASWSFLKDLKRITDSDVKGELFVKELFWMLRLQKDIFATLVARFQKEVYCPNQCGTMSQTLIWCNKCEKQMHFCRKSMDCGERQIEVHRLEDMVLDCQLSWHHASEGLTDYSFYRVWGNSSETLMSKGKEPYLTKTMVGPEDAGNYRCELDTVNAGPATIIYYHVTVLPPRSVEEKPPPNIVTQEEEETPVQVIVPTLEPEPEPEPIPTVTHRPEKKLKSRLLILLILGFVVLVASVIASVLHFRKTRVKSKNSNVENKTSAAEFKSEAESPQKMGSRKLSQAEFHTDSSDKVEEADN.

The signal sequence occupies residues 1 to 21; the sequence is MGLHFTLLLAALANCLCPARL. Cystine bridges form between Cys22-Cys149, Cys25-Cys152, Cys135-Cys159, Cys139-Cys165, and Cys182-Cys233. Residues 22–306 lie on the Extracellular side of the membrane; sequence CIICDPFVVA…HRPEKKLKSR (285 aa). The important for interaction with IZUMO1R stretch occupies residues 148–160; it reads WCNKCEKQMHFCR. The region spanning 167-251 is the Ig-like C2-type domain; that stretch reads ERQIEVHRLE…PATIIYYHVT (85 aa). N-linked (GlcNAc...) asparagine glycosylation is present at Asn204. The helical transmembrane segment at 307–327 threads the bilayer; it reads LLILLILGFVVLVASVIASVL. Residues 328 to 383 lie on the Cytoplasmic side of the membrane; it reads HFRKTRVKSKNSNVENKTSAAEFKSEAESPQKMGSRKLSQAEFHTDSSDKVEEADN. The disordered stretch occupies residues 335 to 383; it reads KSKNSNVENKTSAAEFKSEAESPQKMGSRKLSQAEFHTDSSDKVEEADN. Residues 337–346 show a composition bias toward polar residues; it reads KNSNVENKTS. Phosphoserine occurs at positions 339, 346, and 366. Residues 370 to 383 show a composition bias toward basic and acidic residues; that stretch reads FHTDSSDKVEEADN. Thr372 carries the post-translational modification Phosphothreonine.

This sequence belongs to the Izumo family. As to quaternary structure, monomer, homodimer; disulfide-linked and homooligomer; depending on the context. Interacts with IZUMO1R/JUNO. IZUMO1 and IZUMO1R/JUNO form a complex with 1:1 stoichiometry. In gamete recognition, IZUMO1R/JUNO first binds to monomeric IZUMO1. The weak, but specific interaction with IZUMO1R/JUNO induces IZUMO1 homodimerization. The process follows a tight binding phase where IZUMO1 bends the entire structure towards the sperm membrane side through a thiol-disulfide exchange reaction. The molecule no longer binds to IZUMO1R/JUNO and instead binds to a putative second oocyte receptor. Interacts with ACE3. Part of a oolemmal binding multimeric complex (IZUMO1 complex) composed at least of IZUMO1 and GLIPR1L1; the complex assemblage is influenced by the maturation status of the male germ cell. Interacts with GLIPR1L1. Interacts with FREY; the interaction retains IZUMO1 at the endoplasmic reticulum membrane and coordinates IZUMO1 complex assembly. Interacts with WDR54. Forms a complex with SPACA6 and TMEM81 on spermatocyte cell membrane. Post-translationally, N-glycosylated. Glycosylation is not essential for fusion and for proper protein trafficking in sperm. In terms of processing, phosphorylated. The cytoplasmic C-terminus is phosphorylated and undergoes phosphorylation changes during epididymal transit. In terms of tissue distribution, expressed in sperm (at protein level).

The protein localises to the cell membrane. The protein resides in the cytoplasmic vesicle. It localises to the secretory vesicle. It is found in the acrosome membrane. Functionally, essential sperm cell-surface protein required for fertilization by acting as a ligand for IZUMO1R/JUNO receptor on egg. The IZUMO1:IZUMO1R/JUNO interaction is a necessary adhesion event between sperm and egg that is required for fertilization but is not sufficient for cell fusion. The ligand-receptor interaction probably does not act as a membrane 'fusogen'. Plays a critical role in sperm-oolemma binding prior to plasma membrane fusion. Can mediate cell-cell fusion in cultured mammalian cells independently of its binding to IZUMO1R/JUNO. In Rattus norvegicus (Rat), this protein is Izumo sperm-egg fusion protein 1.